A 359-amino-acid chain; its full sequence is Protein-L-isoaspartate O-methyltransferase domain-containing protein 2 (359 aa).

Gly-2 carries the N-myristoyl glycine lipid modification. Residue Ser-64 is part of the active site. AdoMet binding motif regions lie at residues 85-94, 160-164, and 181-191; these read LNLGSGTGYL, YDRVY, and LKVGGILVMPL. The interval 240 to 250 is BC-box; sequence VRSLQDLARLA. A disordered region spans residues 301–328; the sequence is SNPSDDTSCEDAEEDRREVAERTLQETK. Over residues 314–328 the composition is skewed to basic and acidic residues; sequence EDRREVAERTLQETK. The tract at residues 343-346 is CUL-box; it reads LPLP.

The protein belongs to the methyltransferase superfamily. L-isoaspartyl/D-aspartyl protein methyltransferase family.

The protein resides in the cytoplasm. Functionally, may act as a substrate recognition component of an ECS (Elongin BC-CUL5-SOCS-box protein) E3 ubiquitin ligase complex which mediates the ubiquitination and subsequent proteasomal degradation of target proteins. May bind to the methyltransferase cofactor S-adenosylmethionine (AdoMet) via the N-terminal AdoMet binding motif, but probably does not display methyltransferase activity. The sequence is that of Protein-L-isoaspartate O-methyltransferase domain-containing protein 2 (Pcmtd2) from Mus musculus (Mouse).